The primary structure comprises 882 residues: Probable LRR receptor-like serine/threonine-protein kinase At1g12460 (882 aa).

The signal sequence occupies residues 1 to 21 (MRKVHLFLVLVHFIYISTSRS). Over 22-515 (DSISERDILL…SRNSDALSIS (494 aa)) the chain is Extracellular. Asparagine 76 is a glycosylation site (N-linked (GlcNAc...) asparagine). LRR repeat units lie at residues 92–113 (FIRVLNLFGNRFTGNLPLDYFK), 116–138 (TLWTINVSSNALSGPIPEFISEL), 140–162 (SLRFLDLSKNGFTGEIPVSLFKF), 165–187 (KTKFVSLAHNNIFGSIPASIVNC), 189–210 (NLVGFDFSYNNLKGVLPPRICD), 213–235 (VLEYISVRNNLLSGDVSEEIQKC), 237–258 (RLILVDLGSNLFHGLAPFAVLT), 261–283 (NITYFNVSWNRFGGEIGEIVDCS), 285–308 (SLEFLDASSNELTGRIPTGVMGCK), 309–331 (SLKLLDLESNKLNGSIPGSIGKM), 333–355 (SLSVIRLGNNSIDGVIPRDIGSL), 357–379 (FLQVLNLHNLNLIGEVPEDISNC), 381–404 (VLLELDVSGNDLEGKISKKLLNLT), 405–427 (NIKILDLHRNRLNGSIPPELGNL), 429–451 (KVQFLDLSQNSLSGPIPSSLGSL), and 453–475 (TLTHFNVSYNNLSGVIPPVPMIQ). A glycan (N-linked (GlcNAc...) asparagine) is linked at asparagine 121. 2 N-linked (GlcNAc...) asparagine glycosylation sites follow: asparagine 261 and asparagine 266. N-linked (GlcNAc...) asparagine glycosylation is found at asparagine 321 and asparagine 341. 3 N-linked (GlcNAc...) asparagine glycosylation sites follow: asparagine 402, asparagine 417, and asparagine 426. Residues asparagine 458 and asparagine 463 are each glycosylated (N-linked (GlcNAc...) asparagine). Residues 516–536 (VIIVIIAAAVILFGVCIVLAL) form a helical membrane-spanning segment. The Cytoplasmic segment spans residues 537–882 (NLRARKRRKD…LESIRNGFGS (346 aa)). A Phosphothreonine modification is found at threonine 589. The region spanning 593-876 (LDKENIIGMG…AEVVQVLESI (284 aa)) is the Protein kinase domain. ATP-binding positions include 599-607 (IGMGSIGSV) and lysine 621. Tyrosine 770 carries the phosphotyrosine modification.

Belongs to the protein kinase superfamily. Ser/Thr protein kinase family.

The protein resides in the cell membrane. It catalyses the reaction L-seryl-[protein] + ATP = O-phospho-L-seryl-[protein] + ADP + H(+). It carries out the reaction L-threonyl-[protein] + ATP = O-phospho-L-threonyl-[protein] + ADP + H(+). The sequence is that of Probable LRR receptor-like serine/threonine-protein kinase At1g12460 from Arabidopsis thaliana (Mouse-ear cress).